The primary structure comprises 252 residues: Small ribosomal subunit protein uS3 (252 aa).

The KH type-2 domain occupies 39–111 (IRKLINNFAK…DVNLNVLEVK (73 aa)). Residues 226 to 252 (SQSSNNPNRRPRNFKGGNNNHVNAKKN) form a disordered region.

Belongs to the universal ribosomal protein uS3 family. In terms of assembly, part of the 30S ribosomal subunit. Forms a tight complex with proteins S10 and S14.

Its function is as follows. Binds the lower part of the 30S subunit head. Binds mRNA in the 70S ribosome, positioning it for translation. The sequence is that of Small ribosomal subunit protein uS3 from Aster yellows witches'-broom phytoplasma (strain AYWB).